A 221-amino-acid chain; its full sequence is Transmembrane emp24 domain-containing protein 3 (221 aa).

An N-terminal signal peptide occupies residues 1-25 (MVHEAPHASSFQMLLQLLLLLLLRA). The Lumenal portion of the chain corresponds to 28-184 (LRSAELTFEL…RAEDLNSRVS (157 aa)). The GOLD domain maps to 42–124 (KQCFHEEVEQ…HKTVYFDFQV (83 aa)). The residue at position 103 (R103) is a Dimethylated arginine. Residues 185–205 (YWSVGETIALFVVSFSQVLLL) form a helical membrane-spanning segment. Residues 206–221 (KSFFTEKRPVNRAVHS) lie on the Cytoplasmic side of the membrane. The short motif at 208–209 (FF) is the COPII vesicle coat-binding element. The COPI vesicle coat-binding signature appears at 208–221 (FFTEKRPVNRAVHS).

It belongs to the EMP24/GP25L family. In terms of assembly, monomer in endoplasmic reticulum, endoplasmic reticulum-Golgi intermediate compartment and cis-Golgi network. Interacts (via C-terminus) with COPG1; the interaction involves dimeric TMED3; however, there are conflicting reports on the interaction. Interacts with GORASP1 and GORASP2.

Its subcellular location is the endoplasmic reticulum-Golgi intermediate compartment membrane. The protein localises to the golgi apparatus. It is found in the cis-Golgi network membrane. The protein resides in the golgi stack membrane. It localises to the endoplasmic reticulum membrane. Its subcellular location is the cytoplasmic vesicle. The protein localises to the COPI-coated vesicle membrane. Its function is as follows. Potential role in vesicular protein trafficking, mainly in the early secretory pathway. Contributes to the coupled localization of TMED2 and TMED10 in the cis-Golgi network. The polypeptide is Transmembrane emp24 domain-containing protein 3 (Tmed3) (Mus musculus (Mouse)).